The sequence spans 514 residues: Peptide chain release factor 3 (514 aa).

Residues Lys-8 to His-268 form the tr-type G domain. GTP is bound by residues Ser-17–Thr-24, Asp-85–His-89, and Asn-139–Asp-142.

Belongs to the TRAFAC class translation factor GTPase superfamily. Classic translation factor GTPase family. PrfC subfamily.

It localises to the cytoplasm. Its function is as follows. Increases the formation of ribosomal termination complexes and stimulates activities of RF-1 and RF-2. It binds guanine nucleotides and has strong preference for UGA stop codons. It may interact directly with the ribosome. The stimulation of RF-1 and RF-2 is significantly reduced by GTP and GDP, but not by GMP. In Streptococcus pneumoniae (strain 70585), this protein is Peptide chain release factor 3.